A 1005-amino-acid chain; its full sequence is Helicase-like transcription factor (1005 aa).

Omega-N-methylarginine is present on R27. The DNA-binding element occupies 38–287; it reads EFQDIIPPDD…FSEKDQPENV (250 aa). Residue K112 forms a Glycyl lysine isopeptide (Lys-Gly) (interchain with G-Cter in SUMO2) linkage. The residue at position 195 (Y195) is a Phosphotyrosine; by JAK2. K211 is covalently cross-linked (Glycyl lysine isopeptide (Lys-Gly) (interchain with G-Cter in SUMO2)). 294 to 301 provides a ligand contact to ATP; the sequence is DDMGLGKT. Residues 325–361 show a composition bias toward basic and acidic residues; it reads KNQVKKECNSSESDKPGRKDTIKKTDGLSKEGSRYSE. A disordered region spans residues 325–385; that stretch reads KNQVKKECNS…SELSSSQPKR (61 aa). A compositionally biased stretch (polar residues) spans 373–382; sequence YSMSELSSSQ. A phosphoserine mark is found at S395, S396, and S398. Positions 427-603 constitute a Helicase ATP-binding domain; it reads GPSKIKEDTA…WSLLSFLKLK (177 aa). Residues 554–557 carry the DEGH box motif; it reads DEGH. Residue T733 is modified to Phosphothreonine. The RING-type zinc finger occupies 757–798; sequence CAICLDSLTVPVITHCAHVFCKPCICQCIQNEQPHAKCPLCR. Required for interaction with the RFBP isoform of ATP11B regions lie at residues 767 to 772 and 791 to 796; these read PVITHC and HAKCPL. Residues 834 to 999 form the Helicase C-terminal domain; that stretch reads ALMHALIDLR…EMKQAKINEI (166 aa). Residues 922 to 1005 are interaction with SP1 and SP3; it reads SRVFLMDPAW…INEIRTLIDL (84 aa).

This sequence belongs to the SNF2/RAD54 helicase family. RAD16 subfamily. In terms of assembly, interacts with SP1 and SP3 independently of DNA; the interaction with these transcriptional factors may be required for basal transcription of target genes. Interacts (via the RING-finger) with isoform RFBP of ATP11B. Progesterone-dependent isoform 1 interacts with EGR1; the interaction requires prior binding to DNA and represses c-Rel via a DNA looping mechanism. Interacts with GATA4. Interacts with PCNA; the interaction promotes polyubiquitination of PCNA through association with the UBE2B-RAD18 and UBE2V2-UBE2N ubiquitin ligase complexes. Interacts with RAD18, SHPRH, UBE2V2 and UBE2N. Post-translationally, phosphorylated on serine, threonine, and tyrosine residues. Tyr-195 phosphorylation is catalyzed by JAK2 in response to prolactin treatment. It is required for DNA binding. In terms of tissue distribution, isoform 1 is expressed preferentially in bladder, cervix, diaphragm, duodenum, epididymis, heart, kidney, liver, lung, ovary (granulosa cells), prostate, spleen, testis (predominantly in the Sertoli cells of the seminiferous tubules) and vagina. Isoform 2 is expressed preferentially in lactating mammary gland and uterine endometrium.

It is found in the cytoplasm. The protein localises to the nucleus. It localises to the nucleolus. Its subcellular location is the nucleoplasm. It carries out the reaction S-ubiquitinyl-[E2 ubiquitin-conjugating enzyme]-L-cysteine + [acceptor protein]-L-lysine = [E2 ubiquitin-conjugating enzyme]-L-cysteine + N(6)-ubiquitinyl-[acceptor protein]-L-lysine.. The protein operates within protein modification; protein ubiquitination. Functionally, has both helicase and E3 ubiquitin ligase activities. Possesses intrinsic ATP-dependent nucleosome-remodeling activity. This activity may be required for transcriptional activation or repression of specific target promoters. These may include the SERPINE1, to which this protein can bind directly. Mediates repression by c-Rel through a DNA-looping mechanism. Plays a role in error-free postreplication repair (PRR) of damaged DNA and maintains genomic stability through acting as a ubiquitin ligase for 'Lys-63'-linked polyubiquitination of chromatin-bound PCNA. Transcriptional regulator that mediates the ability of prolactin to augment progesterone-dependent transcription of the SCGB1A1/uteroglobin gene through a bipartite progesterone receptor half-site/overlapping Y-box combination (-38/-26) where progesterone activation is attenuated by nuclear factor Y binding. Regulation also involves two GC-rich sequences in the proximal promoter (positions -162/+90) and a RUSH/SMARCA3 site (positions -616/-611) in the 5'-untranslated region. This chain is Helicase-like transcription factor (HLTF), found in Oryctolagus cuniculus (Rabbit).